The sequence spans 1107 residues: Copine family protein 1 (1107 aa).

The Extracellular portion of the chain corresponds to Met1–His22. Residues Phe23–Phe45 form a helical membrane-spanning segment. The Cytoplasmic portion of the chain corresponds to Phe46–Leu1107. Positions Val67–Asn124 form a coiled coil. Positions Gln478 to Gln488 are enriched in low complexity. 2 disordered regions span residues Gln478–Ser501 and His673–Val698. The segment covering Ile492 to Ser501 has biased composition (basic and acidic residues). Over residues Lys687–Val698 the composition is skewed to polar residues. One can recognise a VWFA domain in the interval Asn863 to Asp1023.

Belongs to the copine family. In terms of assembly, may interact (via VWFA domain) with unc-89 (via Ig-like C2-type 1-3) and unc-96 (via C-terminus); cpna-1 binding sites for unc-89 and unc-96 are different. May interact with pat-6. May interact with lim-9 (via LIM domains) and with scpl-1 (via FCP1 homology domain). As to expression, expressed in body wall muscles (at protein level).

The protein resides in the basal cell membrane. It localises to the cytoplasm. It is found in the myofibril. Its subcellular location is the sarcomere. The protein localises to the m line. Its function is as follows. Involved in the assembly of dense bodies and M lines during body wall muscle development. Acts by recruiting downstream of integrin-associated protein pat-6/actopaxin several dense bodies and M line components including unc-89, lim-9, scpl-1 and unc-96 to integrin-mediated attachment sites. In Caenorhabditis elegans, this protein is Copine family protein 1.